A 77-amino-acid chain; its full sequence is Acyl carrier protein (77 aa).

Residues 2 to 77 (SEKLQKIQAL…DAVAYIEERS (76 aa)) form the Carrier domain. Serine 37 bears the O-(pantetheine 4'-phosphoryl)serine mark.

The protein belongs to the acyl carrier protein (ACP) family. In terms of processing, 4'-phosphopantetheine is transferred from CoA to a specific serine of apo-ACP by AcpS. This modification is essential for activity because fatty acids are bound in thioester linkage to the sulfhydryl of the prosthetic group.

The protein resides in the cytoplasm. It participates in lipid metabolism; fatty acid biosynthesis. Functionally, carrier of the growing fatty acid chain in fatty acid biosynthesis. The polypeptide is Acyl carrier protein (Desulforudis audaxviator (strain MP104C)).